A 200-amino-acid polypeptide reads, in one-letter code: Adenine phosphoribosyltransferase (200 aa).

Belongs to the purine/pyrimidine phosphoribosyltransferase family. In terms of assembly, homodimer.

The protein resides in the cytoplasm. It catalyses the reaction AMP + diphosphate = 5-phospho-alpha-D-ribose 1-diphosphate + adenine. It participates in purine metabolism; AMP biosynthesis via salvage pathway; AMP from adenine: step 1/1. In terms of biological role, catalyzes a salvage reaction resulting in the formation of AMP, that is energically less costly than de novo synthesis. The chain is Adenine phosphoribosyltransferase from Sorangium cellulosum (strain So ce56) (Polyangium cellulosum (strain So ce56)).